The sequence spans 326 residues: N-acetyl-gamma-glutamyl-phosphate reductase (326 aa).

The active site involves cysteine 155.

It belongs to the NAGSA dehydrogenase family. Type 1 subfamily.

Its subcellular location is the cytoplasm. It catalyses the reaction N-acetyl-L-glutamate 5-semialdehyde + phosphate + NADP(+) = N-acetyl-L-glutamyl 5-phosphate + NADPH + H(+). It participates in amino-acid biosynthesis; L-arginine biosynthesis; N(2)-acetyl-L-ornithine from L-glutamate: step 3/4. In terms of biological role, catalyzes the NADPH-dependent reduction of N-acetyl-5-glutamyl phosphate to yield N-acetyl-L-glutamate 5-semialdehyde. This chain is N-acetyl-gamma-glutamyl-phosphate reductase, found in Shewanella loihica (strain ATCC BAA-1088 / PV-4).